We begin with the raw amino-acid sequence, 453 residues long: Polar tube protein 1 (453 aa).

Residues 1-22 (MKGISKILSASIMVMKLGNVYS) form the signal peptide. The disordered stretch occupies residues 61–87 (YVPSSPTTSSSTPGTNNDNETSPTTED). Residues 63-73 (PSSPTTSSSTP) show a composition bias toward low complexity. Positions 74-87 (GTNNDNETSPTTED) are enriched in polar residues. 8 N-linked (GlcNAc...) asparagine glycosylation sites follow: asparagine 79, asparagine 225, asparagine 245, asparagine 265, asparagine 285, asparagine 305, asparagine 325, and asparagine 344. Repeat copies occupy residues 214 to 233 (PCLPTQGGDGSNQTIPGIVY), 234 to 253 (PCQPGQGGSGSNQTIPGVIS), 254 to 273 (PCQPGQGGSGSNQTIPGIVY), 274 to 293 (PCQPGQGGSGSNQTIPGVIS), 294 to 313 (PCQPGQGGSGSNQTIPGIVY), and 314 to 333 (PCQPGQNGDGSNQTIPGVIS). The 6 X 20 AA approximate tandem repeats stretch occupies residues 214-333 (PCLPTQGGDG…SNQTIPGVIS (120 aa)).

Post-translationally, O-mannosylated. O-mannosylation has functional significance for the ability of microsporidia to invade their host cells.

It is found in the spore polar tube. Functionally, involved in formation of a polar tube through which the infectious agent is passed on to the host cell. This is Polar tube protein 1 (PTP1) from Encephalitozoon hellem (Microsporidian parasite).